A 357-amino-acid polypeptide reads, in one-letter code: Phosphoribosylformylglycinamidine cyclo-ligase (357 aa).

This sequence belongs to the AIR synthase family.

It localises to the cytoplasm. The enzyme catalyses 2-formamido-N(1)-(5-O-phospho-beta-D-ribosyl)acetamidine + ATP = 5-amino-1-(5-phospho-beta-D-ribosyl)imidazole + ADP + phosphate + H(+). It functions in the pathway purine metabolism; IMP biosynthesis via de novo pathway; 5-amino-1-(5-phospho-D-ribosyl)imidazole from N(2)-formyl-N(1)-(5-phospho-D-ribosyl)glycinamide: step 2/2. The sequence is that of Phosphoribosylformylglycinamidine cyclo-ligase from Agrobacterium fabrum (strain C58 / ATCC 33970) (Agrobacterium tumefaciens (strain C58)).